The sequence spans 364 residues: Chorismate synthase (364 aa).

Arginine 47 provides a ligand contact to NADP(+). FMN contacts are provided by residues 125–127 (RFS), glycine 285, 300–304 (KPTPS), and arginine 327.

It belongs to the chorismate synthase family. As to quaternary structure, homotetramer. Requires FMNH2 as cofactor.

It carries out the reaction 5-O-(1-carboxyvinyl)-3-phosphoshikimate = chorismate + phosphate. It functions in the pathway metabolic intermediate biosynthesis; chorismate biosynthesis; chorismate from D-erythrose 4-phosphate and phosphoenolpyruvate: step 7/7. In terms of biological role, catalyzes the anti-1,4-elimination of the C-3 phosphate and the C-6 proR hydrogen from 5-enolpyruvylshikimate-3-phosphate (EPSP) to yield chorismate, which is the branch point compound that serves as the starting substrate for the three terminal pathways of aromatic amino acid biosynthesis. This reaction introduces a second double bond into the aromatic ring system. This is Chorismate synthase from Dehalococcoides mccartyi (strain ATCC BAA-2100 / JCM 16839 / KCTC 5957 / BAV1).